The chain runs to 286 residues: 2-hydroxy-6-oxo-6-phenylhexa-2,4-dienoate hydrolase (286 aa).

Substrate contacts are provided by residues 42–43 (GG), Asn51, Asn111, Ser180, and Arg190. His265 (proton acceptor) is an active-site residue. Trp266 lines the substrate pocket.

It belongs to the AB hydrolase superfamily. BphD family. In terms of assembly, homodimer.

The enzyme catalyses 2,6-dioxo-6-phenylhexa-3-enoate + H2O = 2-oxopent-4-enoate + benzoate + H(+). The protein operates within xenobiotic degradation; biphenyl degradation; 2-hydroxy-2,4-pentadienoate and benzoate from biphenyl: step 4/4. In terms of biological role, catalyzes an unusual C-C bond hydrolysis of 2-hydroxy-6-oxo-6-phenylhexa-2,4-dienoic acid (HOPDA) to produce benzoic acid and 2-hydroxy-2,4-pentadienoic acid (HPD). This chain is 2-hydroxy-6-oxo-6-phenylhexa-2,4-dienoate hydrolase, found in Polaromonas naphthalenivorans (strain CJ2).